The sequence spans 46 residues: Delta-actitoxin-Avd1d (46 aa).

3 disulfides stabilise this stretch: cysteine 4/cysteine 44, cysteine 6/cysteine 34, and cysteine 27/cysteine 45.

It belongs to the sea anemone sodium channel inhibitory toxin family. Type I subfamily.

It is found in the secreted. Its subcellular location is the nematocyst. Binds specifically to voltage-gated sodium channels (Nav), thereby delaying their inactivation during signal transduction. Thus it strongly stimulates mammalian cardiac muscle contraction. The polypeptide is Delta-actitoxin-Avd1d (Anemonia sulcata (Mediterranean snakelocks sea anemone)).